The following is a 65-amino-acid chain: Large ribosomal subunit protein bL35 (65 aa).

The segment at 1–52 (MPKIKTNRGAAKRFKRTGSGGFKCVQSHRRHILTKKSTKRKRQLRSPDMVHP) is disordered. Positions 26–44 (QSHRRHILTKKSTKRKRQL) are enriched in basic residues.

The protein belongs to the bacterial ribosomal protein bL35 family.

The protein is Large ribosomal subunit protein bL35 of Methylococcus capsulatus (strain ATCC 33009 / NCIMB 11132 / Bath).